The chain runs to 279 residues: Probable cyclic nucleotide phosphodiesterase Psyc_2036 (279 aa).

The Fe cation site is built by aspartate 23, histidine 25, aspartate 70, asparagine 100, histidine 179, histidine 218, and histidine 220. AMP contacts are provided by residues histidine 25, aspartate 70, and 100–101 (NH). Histidine 220 is an AMP binding site.

Belongs to the cyclic nucleotide phosphodiesterase class-III family. It depends on Fe(2+) as a cofactor.

This is Probable cyclic nucleotide phosphodiesterase Psyc_2036 from Psychrobacter arcticus (strain DSM 17307 / VKM B-2377 / 273-4).